Here is a 329-residue protein sequence, read N- to C-terminus: GTP 3',8-cyclase (329 aa).

In terms of domain architecture, Radical SAM core spans 8–234 (AFARKFYYLR…QLRQRSDGPA (227 aa)). Residue R17 coordinates GTP. [4Fe-4S] cluster is bound by residues C24 and C28. Y30 is a binding site for S-adenosyl-L-methionine. C31 contributes to the [4Fe-4S] cluster binding site. GTP is bound at residue R68. G72 is a binding site for S-adenosyl-L-methionine. T99 contributes to the GTP binding site. S123 contributes to the S-adenosyl-L-methionine binding site. K160 contributes to the GTP binding site. M194 lines the S-adenosyl-L-methionine pocket. Residues C257 and C260 each contribute to the [4Fe-4S] cluster site. 262–264 (RLR) lines the GTP pocket. C274 lines the [4Fe-4S] cluster pocket.

This sequence belongs to the radical SAM superfamily. MoaA family. As to quaternary structure, monomer and homodimer. It depends on [4Fe-4S] cluster as a cofactor.

It carries out the reaction GTP + AH2 + S-adenosyl-L-methionine = (8S)-3',8-cyclo-7,8-dihydroguanosine 5'-triphosphate + 5'-deoxyadenosine + L-methionine + A + H(+). It functions in the pathway cofactor biosynthesis; molybdopterin biosynthesis. Catalyzes the cyclization of GTP to (8S)-3',8-cyclo-7,8-dihydroguanosine 5'-triphosphate. The sequence is that of GTP 3',8-cyclase from Salmonella dublin (strain CT_02021853).